The primary structure comprises 402 residues: MSKLVPPHGGDKLKPLALEGNSLMAELEKAKLLLKVSCSSREVGDIIMMGIGGFTPLEGFMDNVNWQSVCDNMTMSSGLFWPIPITLSTNSEDIKQGDEVALVNGETDDIIATMVVSEKYSIDKSHECNTVYRTTEMAHPGVVMVMAQGKYNLAGSIKVLSDGNFPEKYGSLYMTPMETRAYFDDKGWKTIAAFQTRNPMHRSHEYLAKIAVEICDGVMIHSVLGGLKDGDIPADVRSEAISVLIKNYFVDNTILQSGYPLDMRYAGPREALLHALFRQNYGCSHLIVGRDHAGVNDYYGPFDAHNIFNVIANDALVTKALKFDWTFWCHKCGGISSMRTCPHNSEDRVLLSGTEVRKILSENKELPETFSRPEVAKVLQVYYASIKDEDKIEIKLNDHFTK.

Belongs to the sulfate adenylyltransferase family.

The catalysed reaction is sulfate + ATP + H(+) = adenosine 5'-phosphosulfate + diphosphate. Its pathway is sulfur metabolism; hydrogen sulfide biosynthesis; sulfite from sulfate: step 1/3. This Vesicomyosocius okutanii subsp. Calyptogena okutanii (strain HA) protein is Sulfate adenylyltransferase.